We begin with the raw amino-acid sequence, 1403 residues long: Baculoviral IAP repeat-containing protein 1a (1403 aa).

BIR repeat units follow at residues 63-128 (RLKT…EFLQ), 162-228 (RLES…EFLQ), and 281-346 (RMDT…VFLQ). Residues Cys-315, Cys-318, His-335, and Cys-342 each coordinate Zn(2+). The 295-residue stretch at 464–758 (SVMCVEGETG…EFLAAMRLTE (295 aa)) folds into the NACHT domain. ATP is bound at residue Lys-476.

In terms of assembly, interacts (via NACHT domain) with APAF1 (via CARD and NACHT domains).

In terms of biological role, anti-apoptotic protein which acts by inhibiting the activities of CASP3, CASP7 and CASP9. Can inhibit the autocleavage of pro-CASP9 and cleavage of pro-CASP3 by CASP9. Capable of inhibiting CASP9 autoproteolysis at 'Asp-315' and decreasing the rate of auto proteolysis at 'Asp-330'. Acts as a mediator of neuronal survival in pathological conditions. Prevents motor-neuron apoptosis induced by a variety of signals. In Mus musculus (Mouse), this protein is Baculoviral IAP repeat-containing protein 1a (Naip1).